Here is a 480-residue protein sequence, read N- to C-terminus: Selenium-binding protein 3 (480 aa).

Cysteine 12 and cysteine 13 together coordinate selenite.

This sequence belongs to the selenium-binding protein family. As to expression, expressed in young seedlings, mostly in roots.

The polypeptide is Selenium-binding protein 3 (SBP3) (Arabidopsis thaliana (Mouse-ear cress)).